The primary structure comprises 425 residues: Phosphomethylpyrimidine synthase (425 aa).

Substrate-binding positions include N66, M95, Y124, H159, 181 to 183 (SRG), 222 to 225 (DAYR), and E261. H265 lines the Zn(2+) pocket. Y288 contacts substrate. H329 contacts Zn(2+). C406, C409, and C413 together coordinate [4Fe-4S] cluster.

It belongs to the ThiC family. The cofactor is [4Fe-4S] cluster.

The catalysed reaction is 5-amino-1-(5-phospho-beta-D-ribosyl)imidazole + S-adenosyl-L-methionine = 4-amino-2-methyl-5-(phosphooxymethyl)pyrimidine + CO + 5'-deoxyadenosine + formate + L-methionine + 3 H(+). The protein operates within cofactor biosynthesis; thiamine diphosphate biosynthesis. In terms of biological role, catalyzes the synthesis of the hydroxymethylpyrimidine phosphate (HMP-P) moiety of thiamine from aminoimidazole ribotide (AIR) in a radical S-adenosyl-L-methionine (SAM)-dependent reaction. The protein is Phosphomethylpyrimidine synthase of Archaeoglobus fulgidus (strain ATCC 49558 / DSM 4304 / JCM 9628 / NBRC 100126 / VC-16).